Reading from the N-terminus, the 272-residue chain is Secretagogin (272 aa).

EF-hand domains follow at residues 8 to 43 (LDAA…MLKK), 53 to 89 (ERVQ…QEEN), 101 to 136 (DNSV…LFLQ), 145 to 180 (KLDE…QENF), 193 to 228 (ERKR…MMEL), and 237 to 272 (DLDK…KHKP). Ca(2+)-binding residues include aspartate 21, aspartate 23, asparagine 25, tyrosine 27, and glutamate 32. Positions 114, 116, 118, 120, 125, 158, 160, 162, 164, 169, 206, 208, 210, 217, 250, 252, 254, 256, and 261 each coordinate Ca(2+).

It is found in the cytoplasm. This chain is Secretagogin (scgn), found in Danio rerio (Zebrafish).